Reading from the N-terminus, the 335-residue chain is Transcriptional coactivator YAP1-B (335 aa).

Over residues 1 to 13 the composition is skewed to low complexity; the sequence is MEPGSQQQPSAPG. The disordered stretch occupies residues 1 to 21; it reads MEPGSQQQPSAPGQQPPPVGH. Ser-30 is subject to Phosphoserine; by LATS1 and LATS2. A compositionally biased stretch (polar residues) spans 114–124; the sequence is MNQQRLSQSAP. The disordered stretch occupies residues 114–146; it reads MNQQRLSQSAPVKSPPALQPQSPPSGVLGSGGN. Residues 126-136 show a composition bias toward pro residues; that stretch reads KSPPALQPQSP. The segment at 137–335 is transactivation domain; the sequence is PSGVLGSGGN…LDKESFLTWL (199 aa). Residues 145-173 are a coiled coil; that stretch reads GNQQMRLQQLQMEKERLRLKHQELLRQVR.

The protein belongs to the YAP1 family. Post-translationally, phosphorylated by lats1 and lats2; leading to cytoplasmic translocation and inactivation.

Its subcellular location is the cytoplasm. It is found in the nucleus. The protein localises to the cell junction. The protein resides in the tight junction. It localises to the cell membrane. Its function is as follows. Transcriptional regulator which can act both as a coactivator and a corepressor and is the critical downstream regulatory target in the Hippo signaling pathway that plays a pivotal role in organ size control and tumor suppression by restricting proliferation and promoting apoptosis. Plays a key role in tissue tension and 3D tissue shape by regulating cortical actomyosin network formation. The protein is Transcriptional coactivator YAP1-B of Xenopus laevis (African clawed frog).